The primary structure comprises 194 residues: Naphthalene 1,2-dioxygenase system, small oxygenase component (194 aa).

It belongs to the bacterial ring-hydroxylating dioxygenase beta subunit family. As to quaternary structure, the naphthalene dioxygenase (NDO) multicomponent enzyme system is composed of an electron transfer component and a dioxygenase component (iron sulfur protein (ISP)). The electron transfer component is composed of a ferredoxin reductase (NdoR) and a ferredoxin (NdoA), and the dioxygenase component is formed of a heterohexamer (trimer of heterodimers) of three large alpha subunits (NdoB) and three small beta subunits (NdoC).

It participates in aromatic compound metabolism; naphthalene degradation. In terms of biological role, component of the naphthalene dioxygenase (NDO) multicomponent enzyme system which catalyzes the incorporation of both atoms of molecular oxygen into naphthalene to form cis-(1R,2S)-dihydroxy-1,2-dihydronaphthalene. The beta subunit seems to have a structural role in the holoenzyme. Also able to catalyze the cis-dihydroxylation of biphenyl and phenanthrene. In Pseudomonas putida (Arthrobacter siderocapsulatus), this protein is Naphthalene 1,2-dioxygenase system, small oxygenase component.